The sequence spans 640 residues: MAAGGTGGLREEQRYGLSCGRLGQDNITVLHVKLTETAIRALETYQSHKNLIPFRPSIQFQGLHGLVKIPKNDPLNEVHNFNFYLSNVGKDNPQGSFDCIQQTFSSSGASQLNCLGFIQDKITVCATNDSYQMTRERMTQAEEESRNRSTKVIKPGGPYVGKRVQIRKAPQAVSDTVPERKRSTPMNPANTIRKTHSSSTISQRPYRDRVIHLLALKAYKKPELLARLQKDGVNQKDKNSLGAILQQVANLNSKDLSYTLKDYVFKELQRDWPGYSEIDRRSLESVLSRKLNPSQNAAGTSRSESPVCSSRDAVSSPQKRLLDSEFIDPLMNKKARISHLTNRVPPTLNGHLNPTSEKSAAGLPLPPAAAAIPTPPPLPSTYLPISHPPQIVNSNSNSPSTPEGRGTQDLPVDSFSQNDSIYEDQQDKYTSRTSLETLPPGSVLLKCPKPMEENHSMSHKKSKKKSKKHKEKDQIKKHDIETIEEKEEDLKREEEIAKLNNSSPNSSGGVKEDCTASMEPSAIELPDYLIKYIAIVSYEQRQNYKDDFNAEYDEYRALHARMETVARRFIKLDAQRKRLSPGSKEYQNVHEEVLQEYQKIKQSSPNYHEEKYRCEYLHNKLAHIKRLIGEFDQQQAESWS.

Disordered stretches follow at residues 172–202 (AVSDTVPERKRSTPMNPANTIRKTHSSSTIS), 290–320 (KLNPSQNAAGTSRSESPVCSSRDAVSSPQKR), and 343–490 (RVPP…EEDL). Composition is skewed to polar residues over residues 184-202 (TPMNPANTIRKTHSSSTIS) and 291-318 (LNPSQNAAGTSRSESPVCSSRDAVSSPQ). Low complexity predominate over residues 360 to 372 (AAGLPLPPAAAAI). Residues 391 to 401 (IVNSNSNSPST) show a composition bias toward polar residues. Residues 457-470 (MSHKKSKKKSKKHK) show a composition bias toward basic residues. Basic and acidic residues predominate over residues 471-490 (EKDQIKKHDIETIEEKEEDL). 2 positions are modified to phosphoserine: Ser503 and Ser580. Residues 526–636 (PDYLIKYIAI…LIGEFDQQQA (111 aa)) form the OCEL domain.

The protein belongs to the ELL/occludin family. In terms of assembly, component of the super elongation complex (SEC), at least composed of EAF1, EAF2, CDK9, MLLT3/AF9, AFF (AFF1 or AFF4), the P-TEFb complex and ELL (ELL, ELL2 or ELL3). Component of the little elongation complex (LEC), at least composed of ELL (ELL, ELL2 or ELL3), ZC3H8, ICE1 and ICE2. Interacts with AFF4; the interaction is direct and leads to stabilize ELL2 and prevent ELL2 ubiquitination. Interacts with EAF1 and EAF2. Ubiquitinated by SIAH1, leading to its degradation by the proteasome. Interaction with AFF4 stabilizes ELL2 and prevents ELL2 ubiquitination.

Its subcellular location is the nucleus. Functionally, elongation factor component of the super elongation complex (SEC), a complex required to increase the catalytic rate of RNA polymerase II transcription by suppressing transient pausing by the polymerase at multiple sites along the DNA. Component of the little elongation complex (LEC), a complex required to regulate small nuclear RNA (snRNA) gene transcription by RNA polymerase II and III. Plays a role in immunoglobulin secretion in plasma cells: directs efficient alternative mRNA processing, influencing both proximal poly(A) site choice and exon skipping, as well as immunoglobulin heavy chain (IgH) alternative processing. Probably acts by regulating histone modifications accompanying transition from membrane-specific to secretory IgH mRNA expression. The sequence is that of RNA polymerase II elongation factor ELL2 (ELL2) from Homo sapiens (Human).